We begin with the raw amino-acid sequence, 387 residues long: Succinate--CoA ligase [ADP-forming] subunit beta (387 aa).

In terms of domain architecture, ATP-grasp spans 9–236; it reads KELFAKHNVP…RDATDPLELK (228 aa). Residues Lys-45, 52 to 54, Ser-94, and Glu-99 each bind ATP; that span reads GRG. Residues Asn-191 and Asp-205 each contribute to the Mg(2+) site. Substrate-binding positions include Asn-256 and 318-320; that span reads GIT.

Belongs to the succinate/malate CoA ligase beta subunit family. As to quaternary structure, heterotetramer of two alpha and two beta subunits. The cofactor is Mg(2+).

The catalysed reaction is succinate + ATP + CoA = succinyl-CoA + ADP + phosphate. The enzyme catalyses GTP + succinate + CoA = succinyl-CoA + GDP + phosphate. It functions in the pathway carbohydrate metabolism; tricarboxylic acid cycle; succinate from succinyl-CoA (ligase route): step 1/1. Succinyl-CoA synthetase functions in the citric acid cycle (TCA), coupling the hydrolysis of succinyl-CoA to the synthesis of either ATP or GTP and thus represents the only step of substrate-level phosphorylation in the TCA. The beta subunit provides nucleotide specificity of the enzyme and binds the substrate succinate, while the binding sites for coenzyme A and phosphate are found in the alpha subunit. This Mycolicibacterium smegmatis (strain ATCC 700084 / mc(2)155) (Mycobacterium smegmatis) protein is Succinate--CoA ligase [ADP-forming] subunit beta.